A 174-amino-acid polypeptide reads, in one-letter code: Interleukin-10 (174 aa).

A signal peptide spans 1 to 16 (MPTWMLLFCLLCVTSS). Asn-17 carries an N-linked (GlcNAc...) asparagine glycan. Cystine bridges form between Cys-26/Cys-122 and Cys-76/Cys-128.

The protein belongs to the IL-10 family. Homodimer. Interacts with IL10RA and IL10RB.

The protein resides in the secreted. Major immune regulatory cytokine that acts on many cells of the immune system where it has profound anti-inflammatory functions, limiting excessive tissue disruption caused by inflammation. Mechanistically, IL10 binds to its heterotetrameric receptor comprising IL10RA and IL10RB leading to JAK1 and STAT2-mediated phosphorylation of STAT3. In turn, STAT3 translocates to the nucleus where it drives expression of anti-inflammatory mediators. Targets antigen-presenting cells (APCs) such as macrophages and monocytes and inhibits their release of pro-inflammatory cytokines including granulocyte-macrophage colony-stimulating factor /GM-CSF, granulocyte colony-stimulating factor/G-CSF, IL-1 alpha, IL-1 beta, IL-6, IL-8 and TNF-alpha. Also interferes with antigen presentation by reducing the expression of MHC-class II and co-stimulatory molecules, thereby inhibiting their ability to induce T cell activation. In addition, controls the inflammatory response of macrophages by reprogramming essential metabolic pathways including mTOR signaling. The protein is Interleukin-10 (IL10) of Trichosurus vulpecula (Brush-tailed possum).